The following is a 177-amino-acid chain: MPLILGVDPGSRKMGYGIINATGSRLGYVASGVVRIPQPLLVADCLAERLKVIFDSLSEIIEQYQPQEFAIENVFMAKSAGSALKLGQARGAAIVAAVNKDLPVSEYEARKVKQAVVGTGAADKLQVQHMVCTLLKLSKAPAEDAADALAVAICHANSQQNLIRMAGARRYRRGRTV.

Active-site residues include aspartate 8, glutamate 72, and aspartate 144. 3 residues coordinate Mg(2+): aspartate 8, glutamate 72, and aspartate 144.

Belongs to the RuvC family. In terms of assembly, homodimer which binds Holliday junction (HJ) DNA. The HJ becomes 2-fold symmetrical on binding to RuvC with unstacked arms; it has a different conformation from HJ DNA in complex with RuvA. In the full resolvosome a probable DNA-RuvA(4)-RuvB(12)-RuvC(2) complex forms which resolves the HJ. Mg(2+) is required as a cofactor.

The protein resides in the cytoplasm. The catalysed reaction is Endonucleolytic cleavage at a junction such as a reciprocal single-stranded crossover between two homologous DNA duplexes (Holliday junction).. The RuvA-RuvB-RuvC complex processes Holliday junction (HJ) DNA during genetic recombination and DNA repair. Endonuclease that resolves HJ intermediates. Cleaves cruciform DNA by making single-stranded nicks across the HJ at symmetrical positions within the homologous arms, yielding a 5'-phosphate and a 3'-hydroxyl group; requires a central core of homology in the junction. The consensus cleavage sequence is 5'-(A/T)TT(C/G)-3'. Cleavage occurs on the 3'-side of the TT dinucleotide at the point of strand exchange. HJ branch migration catalyzed by RuvA-RuvB allows RuvC to scan DNA until it finds its consensus sequence, where it cleaves and resolves the cruciform DNA. The chain is Crossover junction endodeoxyribonuclease RuvC from Teredinibacter turnerae (strain ATCC 39867 / T7901).